The sequence spans 210 residues: Glutathione S-transferase P 1 (210 aa).

A GST N-terminal domain is found at 1 to 80 (PEYTIIYFNA…LLARNHDLYG (80 aa)). Glutathione contacts are provided by residues tyrosine 7, arginine 13, tryptophan 38, lysine 44, 51–52 (QL), and 64–65 (QS). In terms of domain architecture, GST C-terminal spans 82-203 (NPREASLIDM…SSDAHKKRPI (122 aa)).

It belongs to the GST superfamily. Pi family. In terms of assembly, homodimer.

It localises to the cytoplasm. The protein resides in the mitochondrion. It is found in the nucleus. The catalysed reaction is RX + glutathione = an S-substituted glutathione + a halide anion + H(+). Conjugation of reduced glutathione to a wide number of exogenous and endogenous hydrophobic electrophiles. This Bufo bufo (European toad) protein is Glutathione S-transferase P 1.